Consider the following 364-residue polypeptide: D-alanine--D-alanine ligase (364 aa).

The 214-residue stretch at 134 to 347 (RRLACINGLK…YPDLLDELIN (214 aa)) folds into the ATP-grasp domain. Residue 167–222 (ASEFGWPLFVKPCSLGSSVGIHKANNMDELNAAVADALRYDEEILVEEFIVGREIE) participates in ATP binding. Positions 300, 314, and 316 each coordinate Mg(2+).

This sequence belongs to the D-alanine--D-alanine ligase family. The cofactor is Mg(2+). It depends on Mn(2+) as a cofactor.

The protein localises to the cytoplasm. The enzyme catalyses 2 D-alanine + ATP = D-alanyl-D-alanine + ADP + phosphate + H(+). The protein operates within cell wall biogenesis; peptidoglycan biosynthesis. In terms of biological role, cell wall formation. The chain is D-alanine--D-alanine ligase from Legionella pneumophila (strain Lens).